The chain runs to 228 residues: Leucine rich adaptor protein 1-like (228 aa).

An N-acetylmethionine modification is found at Met-1. The tract at residues 1–89 (MEDSPLPDLR…GSPRGSHSSA (89 aa)) is disordered. Basic and acidic residues-rich tracts occupy residues 8 to 21 (DLRD…RKVP) and 28 to 42 (LRGE…DRDP). Residues 44–56 (GGSGGGGGGGGGC) are compositionally biased toward gly residues. Residues 57-88 (SSSSSYCSFPPSLSSSSSSSPTSGSPRGSHSS) are compositionally biased toward low complexity.

The polypeptide is Leucine rich adaptor protein 1-like (LURAP1L) (Homo sapiens (Human)).